We begin with the raw amino-acid sequence, 262 residues long: Ribosomal RNA small subunit methyltransferase A (262 aa).

Positions 14, 16, 41, 62, 87, and 109 each coordinate S-adenosyl-L-methionine.

It belongs to the class I-like SAM-binding methyltransferase superfamily. rRNA adenine N(6)-methyltransferase family. RsmA subfamily.

Its subcellular location is the cytoplasm. It carries out the reaction adenosine(1518)/adenosine(1519) in 16S rRNA + 4 S-adenosyl-L-methionine = N(6)-dimethyladenosine(1518)/N(6)-dimethyladenosine(1519) in 16S rRNA + 4 S-adenosyl-L-homocysteine + 4 H(+). Specifically dimethylates two adjacent adenosines (A1518 and A1519) in the loop of a conserved hairpin near the 3'-end of 16S rRNA in the 30S particle. May play a critical role in biogenesis of 30S subunits. This chain is Ribosomal RNA small subunit methyltransferase A, found in Francisella tularensis subsp. novicida (strain U112).